The sequence spans 515 residues: Probable cytochrome P450 4p3 (515 aa).

The heme site is built by Glu322 and Cys461.

Belongs to the cytochrome P450 family. Heme serves as cofactor.

The protein localises to the endoplasmic reticulum membrane. It localises to the microsome membrane. May be involved in the metabolism of insect hormones and in the breakdown of synthetic insecticides. In Drosophila melanogaster (Fruit fly), this protein is Probable cytochrome P450 4p3 (Cyp4p3).